Here is an 89-residue protein sequence, read N- to C-terminus: NADH-ubiquinone oxidoreductase chain 4L (89 aa).

The next 3 membrane-spanning stretches (helical) occupy residues 1–21 (MNIT…NRKN), 22–42 (IILM…LILV), and 57–77 (IYII…LVAF).

Belongs to the complex I subunit 4L family.

It localises to the mitochondrion membrane. It catalyses the reaction a ubiquinone + NADH + 5 H(+)(in) = a ubiquinol + NAD(+) + 4 H(+)(out). In terms of biological role, core subunit of the mitochondrial membrane respiratory chain NADH dehydrogenase (Complex I) that is believed to belong to the minimal assembly required for catalysis. Complex I functions in the transfer of electrons from NADH to the respiratory chain. The immediate electron acceptor for the enzyme is believed to be ubiquinone. This Neurospora crassa (strain ATCC 24698 / 74-OR23-1A / CBS 708.71 / DSM 1257 / FGSC 987) protein is NADH-ubiquinone oxidoreductase chain 4L (ndh-4L).